Consider the following 359-residue polypeptide: 4-hydroxy-3-methylbut-2-en-1-yl diphosphate synthase (flavodoxin) (359 aa).

Positions 264, 267, 299, and 306 each coordinate [4Fe-4S] cluster.

Belongs to the IspG family. Requires [4Fe-4S] cluster as cofactor.

The enzyme catalyses (2E)-4-hydroxy-3-methylbut-2-enyl diphosphate + oxidized [flavodoxin] + H2O + 2 H(+) = 2-C-methyl-D-erythritol 2,4-cyclic diphosphate + reduced [flavodoxin]. The protein operates within isoprenoid biosynthesis; isopentenyl diphosphate biosynthesis via DXP pathway; isopentenyl diphosphate from 1-deoxy-D-xylulose 5-phosphate: step 5/6. Its function is as follows. Converts 2C-methyl-D-erythritol 2,4-cyclodiphosphate (ME-2,4cPP) into 1-hydroxy-2-methyl-2-(E)-butenyl 4-diphosphate. This chain is 4-hydroxy-3-methylbut-2-en-1-yl diphosphate synthase (flavodoxin), found in Helicobacter pylori (strain P12).